The chain runs to 530 residues: C2H2-type transcription factor MSN2 (530 aa).

2 C2H2-type zinc fingers span residues 409 to 437 (FVCDLCNRRFRRQEHLKRHYRSLHTQEKP) and 438 to 465 (FECNECGKKFSRSDNLAQHARTHASGGA).

The protein resides in the nucleus. It localises to the cytoplasm. In terms of biological role, transcription factor that acts as a key downstream transcription factor in the HOG1-MAPK pathway. Plays crucial roles in the regulation of dimorphism transition, aggravated pigmentation, conidiation, microsclerotia formation and subsequent virulence towards Spodoptera litura larvae. More specifically regulates the expression of genes involved in antioxidation, pigment biosynthesis and ion transport and storage. The polypeptide is C2H2-type transcription factor MSN2 (Metarhizium rileyi (strain RCEF 4871) (Nomuraea rileyi)).